The chain runs to 285 residues: Probable endonuclease 4 (285 aa).

Residues His-69, His-109, Glu-145, Asp-179, His-182, His-216, Asp-229, His-231, and Glu-261 each contribute to the Zn(2+) site.

The protein belongs to the AP endonuclease 2 family. Zn(2+) serves as cofactor.

It catalyses the reaction Endonucleolytic cleavage to 5'-phosphooligonucleotide end-products.. Functionally, endonuclease IV plays a role in DNA repair. It cleaves phosphodiester bonds at apurinic or apyrimidinic (AP) sites, generating a 3'-hydroxyl group and a 5'-terminal sugar phosphate. The polypeptide is Probable endonuclease 4 (Escherichia coli O81 (strain ED1a)).